The following is a 579-amino-acid chain: Tricyclene synthase 0e23, chloroplastic (579 aa).

The transit peptide at 1 to 66 (MAFCISYLGA…ALCLNAHSTS (66 aa)) directs the protein to the chloroplast. N-linked (GlcNAc...) asparagine glycans are attached at residues asparagine 27, asparagine 204, and asparagine 317. Residues aspartate 336 and aspartate 340 each coordinate Mg(2+). Positions 336 to 340 (DDIFD) match the DDXXD motif motif. Asparagine 382 and asparagine 463 each carry an N-linked (GlcNAc...) asparagine glycan. Residues asparagine 480 and glutamate 488 each contribute to the Mg(2+) site. Asparagine 507 carries N-linked (GlcNAc...) asparagine glycosylation.

The protein belongs to the terpene synthase family. Tpsg subfamily. Mg(2+) serves as cofactor. It depends on Mn(2+) as a cofactor. As to expression, accumulates in flowers; mostly expressed in both upper and lower petal lobes, and, to a lower extent, in tube and stamens.

It is found in the plastid. Its subcellular location is the chloroplast stroma. The enzyme catalyses (2E)-geranyl diphosphate = tricyclene + diphosphate. It carries out the reaction (2E)-geranyl diphosphate = (E)-beta-ocimene + diphosphate. It participates in secondary metabolite biosynthesis; terpenoid biosynthesis. Its function is as follows. Contributes to floral scent emission. The polypeptide is Tricyclene synthase 0e23, chloroplastic (0e23) (Antirrhinum majus (Garden snapdragon)).